The chain runs to 221 residues: N-(5'-phosphoribosyl)anthranilate isomerase (221 aa).

The protein belongs to the TrpF family.

The enzyme catalyses N-(5-phospho-beta-D-ribosyl)anthranilate = 1-(2-carboxyphenylamino)-1-deoxy-D-ribulose 5-phosphate. It functions in the pathway amino-acid biosynthesis; L-tryptophan biosynthesis; L-tryptophan from chorismate: step 3/5. The polypeptide is N-(5'-phosphoribosyl)anthranilate isomerase (Chlorobaculum parvum (strain DSM 263 / NCIMB 8327) (Chlorobium vibrioforme subsp. thiosulfatophilum)).